A 270-amino-acid polypeptide reads, in one-letter code: Small ribosomal subunit protein uS3 (270 aa).

One can recognise a KH type-2 domain in the interval 38-106 (IRQMLTRGME…QVQLNILEVK (69 aa)). A disordered region spans residues 212 to 270 (EREAAQAAQRAAGPQRRERPGRRRRGGGGGGGQQQQQAEKATAQATEAAKAAKSGNEGS). Low complexity-rich tracts occupy residues 216–225 (AQAAQRAAGP) and 245–263 (QQQQ…AKAA).

It belongs to the universal ribosomal protein uS3 family. As to quaternary structure, part of the 30S ribosomal subunit. Forms a tight complex with proteins S10 and S14.

Its function is as follows. Binds the lower part of the 30S subunit head. Binds mRNA in the 70S ribosome, positioning it for translation. This is Small ribosomal subunit protein uS3 from Thermobifida fusca (strain YX).